Here is a 133-residue protein sequence, read N- to C-terminus: ATP synthase epsilon chain (133 aa).

Belongs to the ATPase epsilon chain family. F-type ATPases have 2 components, CF(1) - the catalytic core - and CF(0) - the membrane proton channel. CF(1) has five subunits: alpha(3), beta(3), gamma(1), delta(1), epsilon(1). CF(0) has three main subunits: a, b and c.

Its subcellular location is the cell membrane. In terms of biological role, produces ATP from ADP in the presence of a proton gradient across the membrane. The polypeptide is ATP synthase epsilon chain (Clostridium perfringens (strain SM101 / Type A)).